We begin with the raw amino-acid sequence, 1382 residues long: ABC-type transporter atr1 (1382 aa).

The span at 1-12 (MRFRSDSRADHQ) shows a compositional bias: basic and acidic residues. The interval 1–56 (MRFRSDSRADHQHPKKQGSMDPDTIQALKYQDRSSSSSSNNKPKEKVGSASTSPSP) is disordered. Residue N62 is glycosylated (N-linked (GlcNAc...) asparagine). The next 6 helical transmembrane spans lie at 101 to 121 (LFGT…NIFI), 159 to 179 (LILL…MAVF), 233 to 253 (LPMA…AFAF), 259 to 279 (LVLL…GALT), 339 to 359 (GVGV…AFFY), and 374 to 394 (IVSV…LFSM). The ABC transmembrane type-1 1 domain maps to 101-400 (LFGTGMAIAA…LFSMIENFTM (300 aa)). Residue N397 is glycosylated (N-linked (GlcNAc...) asparagine). The ABC transporter 1 domain occupies 445–688 (LKLDHVHFAY…PNGTFASMLR (244 aa)). 480-487 (GLSGSGKS) lines the ATP pocket. N680 carries an N-linked (GlcNAc...) asparagine glycan. The disordered stretch occupies residues 738-768 (SVKPKDPSKNFEPPGESYASPAADGVKQDAP). The ABC transmembrane type-1 2 domain maps to 797–1094 (LGSLCAAIIG…IFNYSADFSS (298 aa)). The helical transmembrane segment at 800 to 820 (LCAAIIGAVYPVYAILFGTAI) threads the bilayer. Residue N827 is glycosylated (N-linked (GlcNAc...) asparagine). The helical transmembrane segment at 848–868 (ISSGSFFIVAVGCAFISFYHV) threads the bilayer. N-linked (GlcNAc...) asparagine glycosylation is present at N903. The next 2 helical transmembrane spans lie at 911-931 (SLSV…GSIV) and 951-973 (LALV…LRVL). An N-linked (GlcNAc...) asparagine glycan is attached at N1020. 2 helical membrane-spanning segments follow: residues 1034–1054 (VLFG…FWYG) and 1067–1087 (GFFT…NIFN). The region spanning 1136 to 1377 (IALKEVTFRY…DGLFALMARL (242 aa)) is the ABC transporter 2 domain. Residue 1171-1178 (GGSGSGKS) participates in ATP binding. An N-linked (GlcNAc...) asparagine glycan is attached at N1324.

This sequence belongs to the ABC transporter superfamily. ABCB family. Multidrug resistance exporter (TC 3.A.1.201) subfamily.

It is found in the cell membrane. Its function is as follows. ABC-type transporter; part of the gene cluster that mediates the biosynthesis of the glycolipid biosurfactant ustilagic acid (UA). UA is a secreted cellobiose glycolipid that is toxic for many microorganisms and confers biocontrol activity to U.maydis. Export of UA is presumably catalyzed by the ABC transporter atr1. Atr1 appears to be quite unspecific, as many of the UA derivatives produced by cluster mutant strains are readily exported. The sequence is that of ABC-type transporter atr1 from Mycosarcoma maydis (Corn smut fungus).